The chain runs to 227 residues: E3 ubiquitin-protein ligase ZNRF1 (227 aa).

Residues methionine 1–glycine 42 form a disordered region. Residue glycine 2 is the site of N-myristoyl glycine attachment. The segment at glycine 2–arginine 10 is required for endosomal and lysosomal localization and myristoylation. Phosphoserine occurs at positions 50, 52, and 53. A disordered region spans residues glycine 65–glutamate 105. Tyrosine 103 is modified (phosphotyrosine). At serine 123 the chain carries Phosphoserine. The segment at cysteine 184–proline 225 adopts an RING-type; atypical zinc-finger fold.

Interacts with AKT1, GLUL and TUBB2A. Interacts with ZNRF2. Interacts (via its RING domain) with UBE2N. Interacts (when phosphorylated) with YWHAE. N-myristoylation targets ZNRF1 to intracellular membranes. Post-translationally, phosphorylated by SRC at Tyr-103; leading to 'Lys-63'-linked ubiquitination of TLR3, lysosomal trafficking and degradation.

The protein localises to the endosome. The protein resides in the lysosome. Its subcellular location is the membrane. It is found in the cytoplasmic vesicle. It localises to the secretory vesicle. The protein localises to the synaptic vesicle membrane. The catalysed reaction is S-ubiquitinyl-[E2 ubiquitin-conjugating enzyme]-L-cysteine + [acceptor protein]-L-lysine = [E2 ubiquitin-conjugating enzyme]-L-cysteine + N(6)-ubiquitinyl-[acceptor protein]-L-lysine.. It functions in the pathway protein modification; protein ubiquitination. Its function is as follows. E3 ubiquitin-protein ligase that plays a role in different processes including cell differentiation, receptor recycling or regulation of inflammation. Mediates the ubiquitination of AKT1 and GLUL, thereby playing a role in neuron cells differentiation. Plays a role in the establishment and maintenance of neuronal transmission and plasticity. Regulates Schwann cells differentiation by mediating ubiquitination of GLUL. Promotes neurodegeneration by mediating 'Lys-48'-linked polyubiquitination and subsequent degradation of AKT1 in axons: degradation of AKT1 prevents AKT1-mediated phosphorylation of GSK3B, leading to GSK3B activation and phosphorylation of DPYSL2/CRMP2 followed by destabilization of microtubule assembly in axons. Ubiquitinates the Na(+)/K(+) ATPase alpha-1 subunit/ATP1A1 and thereby influences its endocytosis and/or degradation. Controls ligand-induced EGFR signaling via mediating receptor ubiquitination and recruitment of the ESCRT machinery. Acts as a negative feedback mechanism controlling TLR3 trafficking by mediating TLR3 'Lys-63'-linked polyubiquitination to reduce type I IFN production. Modulates inflammation by promoting caveolin-1/CAV1 ubiquitination and degradation to regulate TLR4-activated immune response. In Mus musculus (Mouse), this protein is E3 ubiquitin-protein ligase ZNRF1 (Znrf1).